We begin with the raw amino-acid sequence, 202 residues long: uncharacterized protein (202 aa).

Residues 1 to 19 form the signal peptide; that stretch reads MRRKNGFSVASVFILCSIA. A helical membrane pass occupies residues 177–199; that stretch reads FLASSSSSFSSFLPSIAIILFFV.

The protein localises to the membrane. This is an uncharacterized protein from Caenorhabditis elegans.